Reading from the N-terminus, the 197-residue chain is 7-methyl-GTP pyrophosphatase (197 aa).

D74 functions as the Proton acceptor in the catalytic mechanism.

It belongs to the Maf family. YceF subfamily. A divalent metal cation is required as a cofactor.

It is found in the cytoplasm. It catalyses the reaction N(7)-methyl-GTP + H2O = N(7)-methyl-GMP + diphosphate + H(+). Nucleoside triphosphate pyrophosphatase that hydrolyzes 7-methyl-GTP (m(7)GTP). May have a dual role in cell division arrest and in preventing the incorporation of modified nucleotides into cellular nucleic acids. This Saccharophagus degradans (strain 2-40 / ATCC 43961 / DSM 17024) protein is 7-methyl-GTP pyrophosphatase.